A 96-amino-acid polypeptide reads, in one-letter code: Small ribosomal subunit protein bS6 (96 aa).

The protein belongs to the bacterial ribosomal protein bS6 family.

Its function is as follows. Binds together with bS18 to 16S ribosomal RNA. This is Small ribosomal subunit protein bS6 from Mycobacteroides abscessus (strain ATCC 19977 / DSM 44196 / CCUG 20993 / CIP 104536 / JCM 13569 / NCTC 13031 / TMC 1543 / L948) (Mycobacterium abscessus).